The chain runs to 114 residues: Dihydroneopterin monophosphate aldolase (114 aa).

Zn(2+) contacts are provided by histidine 15, histidine 26, and histidine 28.

The protein belongs to the PTPS family. It depends on Zn(2+) as a cofactor.

It catalyses the reaction 7,8-dihydroneopterin 3'-phosphate = glycolaldehyde phosphate + 6-hydroxymethyl-7,8-dihydropterin. Catalyzes the conversion of 7,8-dihydroneopterin monophosphate (H2NMP) to 6-hydroxymethyl-7,8-dihydropterin (6-HMD). Cannot use 7,8-dihydroneopterin (H2Neo) or 7,8-dihydroneopterin triphosphate (H2NTP) as substrate. This chain is Dihydroneopterin monophosphate aldolase, found in Pyrococcus furiosus (strain ATCC 43587 / DSM 3638 / JCM 8422 / Vc1).